Here is a 528-residue protein sequence, read N- to C-terminus: Tyrosine--tRNA ligase, cytoplasmic (528 aa).

An N-acetylmethionine modification is found at methionine 1. Residue glycine 2 is modified to N-acetylglycine; in Tyrosine--tRNA ligase, cytoplasmic, N-terminally processed. Tyrosine 39 serves as a coordination point for L-tyrosine. Position 39 (tyrosine 39) interacts with trans-resveratrol. The 'HIGH' region motif lies at 44 to 52 (TTGKPHVAY). L-tyrosine is bound by residues tyrosine 166, glutamine 170, aspartate 173, and glutamine 188. Trans-resveratrol contacts are provided by glutamine 170 and aspartate 173. Lysine 197 carries the post-translational modification N6-acetyllysine. Position 205 is a phosphoserine (serine 205). The residue at position 206 (lysine 206) is an N6-acetyllysine. The 'KMSKS' region signature appears at 222 to 226 (KMSSS). The short motif at 242 to 247 (KKKLKK) is the Nuclear localization signal element. The tract at residues 339–363 (AAYPDPSKQKPPAKGPAKNSEPEEV) is disordered. Positions 364-468 (IPSRLDIRVG…AGSAPGERVF (105 aa)) constitute a tRNA-binding domain. Serine 386 is modified (phosphoserine). An N6-acetyllysine mark is found at lysine 474, lysine 482, and lysine 490.

Belongs to the class-I aminoacyl-tRNA synthetase family. As to quaternary structure, homodimer. Interacts (when binding to resveratrol) with PARP1; interaction stimulates the poly-ADP-ribosyltransferase activity of PARP1.

The protein localises to the cytoplasm. It localises to the nucleus. The enzyme catalyses tRNA(Tyr) + L-tyrosine + ATP = L-tyrosyl-tRNA(Tyr) + AMP + diphosphate + H(+). With respect to regulation, resveratrol strongly inhibits the tyrosine--tRNA ligase activity. Functionally, tyrosine--tRNA ligase that catalyzes the attachment of tyrosine to tRNA(Tyr) in a two-step reaction: tyrosine is first activated by ATP to form Tyr-AMP and then transferred to the acceptor end of tRNA(Tyr). Also acts as a positive regulator of poly-ADP-ribosylation in the nucleus, independently of its tyrosine--tRNA ligase activity. Activity is switched upon resveratrol-binding: resveratrol strongly inhibits the tyrosine--tRNA ligase activity and promotes relocalization to the nucleus, where YARS1 specifically stimulates the poly-ADP-ribosyltransferase activity of PARP1. In Mus musculus (Mouse), this protein is Tyrosine--tRNA ligase, cytoplasmic (Yars1).